A 454-amino-acid polypeptide reads, in one-letter code: DNA repair protein RadA (454 aa).

Residues 11 to 28 form a C4-type zinc finger; sequence CTECGTHSPKWLGQCSGC. 94-101 contacts ATP; sequence GEPGIGKS. The short motif at 251 to 255 is the RadA KNRFG motif element; that stretch reads KNRFG. Residues 350-454 are lon-protease-like; it reads DVFLSIAGGL…TIKDAVRLLQ (105 aa).

This sequence belongs to the RecA family. RadA subfamily.

Functionally, DNA-dependent ATPase involved in processing of recombination intermediates, plays a role in repairing DNA breaks. Stimulates the branch migration of RecA-mediated strand transfer reactions, allowing the 3' invading strand to extend heteroduplex DNA faster. Binds ssDNA in the presence of ADP but not other nucleotides, has ATPase activity that is stimulated by ssDNA and various branched DNA structures, but inhibited by SSB. Does not have RecA's homology-searching function. This is DNA repair protein RadA from Chlamydia trachomatis serovar D (strain ATCC VR-885 / DSM 19411 / UW-3/Cx).